The sequence spans 325 residues: Plasminogen (325 aa).

Kringle domains lie at 80-146 and 159-217; these read ACVK…VPSC and LTPA…VLSV. 4 cysteine pairs are disulfide-bonded: Cys81–Cys146, Cys102–Cys135, Cys124–Cys141, and Cys188–Cys212.

Belongs to the peptidase S1 family. Plasminogen subfamily.

The protein localises to the secreted. It carries out the reaction Preferential cleavage: Lys-|-Xaa &gt; Arg-|-Xaa, higher selectivity than trypsin. Converts fibrin into soluble products.. Its function is as follows. Plasmin dissolves the fibrin of blood clots and acts as a proteolytic factor in a variety of other processes including embryonic development, tissue remodeling, tumor invasion, and inflammation. The chain is Plasminogen from Petromyzon marinus (Sea lamprey).